A 274-amino-acid polypeptide reads, in one-letter code: Dermonecrotic toxin SdSicTox-betaIIB1bviii (274 aa).

His5 is a catalytic residue. The Mg(2+) site is built by Glu25 and Asp27. Catalysis depends on His41, which acts as the Nucleophile. 2 disulfide bridges follow: Cys45–Cys51 and Cys47–Cys190. Asp85 provides a ligand contact to Mg(2+).

This sequence belongs to the arthropod phospholipase D family. Class II subfamily. Mg(2+) serves as cofactor. In terms of tissue distribution, expressed by the venom gland.

It is found in the secreted. The catalysed reaction is an N-(acyl)-sphingosylphosphocholine = an N-(acyl)-sphingosyl-1,3-cyclic phosphate + choline. It carries out the reaction an N-(acyl)-sphingosylphosphoethanolamine = an N-(acyl)-sphingosyl-1,3-cyclic phosphate + ethanolamine. The enzyme catalyses a 1-acyl-sn-glycero-3-phosphocholine = a 1-acyl-sn-glycero-2,3-cyclic phosphate + choline. It catalyses the reaction a 1-acyl-sn-glycero-3-phosphoethanolamine = a 1-acyl-sn-glycero-2,3-cyclic phosphate + ethanolamine. In terms of biological role, dermonecrotic toxins cleave the phosphodiester linkage between the phosphate and headgroup of certain phospholipids (sphingolipid and lysolipid substrates), forming an alcohol (often choline) and a cyclic phosphate. This toxin acts on sphingomyelin (SM). It may also act on ceramide phosphoethanolamine (CPE), lysophosphatidylcholine (LPC) and lysophosphatidylethanolamine (LPE), but not on lysophosphatidylserine (LPS), and lysophosphatidylglycerol (LPG). It acts by transphosphatidylation, releasing exclusively cyclic phosphate products as second products. Induces dermonecrosis, hemolysis, increased vascular permeability, edema, inflammatory response, and platelet aggregation. The sequence is that of Dermonecrotic toxin SdSicTox-betaIIB1bviii from Sicarius cf. damarensis (strain GJB-2008) (Six-eyed sand spider).